Reading from the N-terminus, the 179-residue chain is Transcription initiation factor TFIID subunit 10 (179 aa).

The segment at M1–L23 is disordered.

The protein belongs to the TAF10 family. Component of the TFIID basal transcription factor complex, composed of TATA-box-binding protein tbp-1, and a number of TBP-associated factors (TAFs).

It localises to the nucleus. Functionally, the TFIID basal transcription factor complex plays a major role in the initiation of RNA polymerase II (Pol II)-dependent transcription. TFIID recognizes and binds promoters via its subunit tbp-1, a TATA-box-binding protein, and promotes assembly of the pre-initiation complex (PIC). The TFIID complex consists of tbp-1 and TBP-associated factors (TAFs), including taf-10. Essential for early embryonic development, but not required for transcription of some genes; probably acts via activating transcription initiation by RNA Pol II, as part of the TFIID complex. The sequence is that of Transcription initiation factor TFIID subunit 10 from Caenorhabditis elegans.